The primary structure comprises 2155 residues: MNYSSFLRIWVSFIFALVQHQAQPRELMYPFWQNDTKTPKVDDGSSSEIKLAIPVFFFGVPYRTVYVNNNGVVSFNVLVSQFTPESFPLTDGRAFVAPFWADVHNGIRGEIYYRETMEPAILKRATKDIRKYFKDMATFSATWVFIVTWEEVTFYGGSSTTPVNTFQAVLVSDGSYTFTLFNYYEINWTTGTASGGDPLTGLGGVMAQAGFNGGNLTNFFSLPGSRTPEIVNIQETTNVNVPGRWAFKVDGKEIDPANGCTSRGQFLRRGEVFWDDLNCTVKCRCLDFNNEIYCQEASCSPYEVCEPKGKFFYCSAVETSTCVVFGEPHYHTFDGFLFHFQGSCAYLLARQCLQTSSLPFFSVEAKNEHRRGSAVSWVKELSVEVNGYKILIPKGSYGRVKVNDLVTSLPVTLDLGTVKIYQSGISTAVETDFGLLVTFDGQHYASISVPGSYINSTCGLCGNYNKNPLDDFLRPDGRPAMSVLDLGESWRVYHADWKCDSGCVDNCTQCDAATEALYFGSDYCGFLNKTDGPLWECGTVVDPTAFVHSCVYDLCSVRDNGTLLCQAIQAYALVCQALGIPIGDWRTQTGCVSTVQCPSFSHYSVCTSSCPDTCSDLTASRNCATPCTEGCECNQGFVLSTSQCVPLHKCGCDFDGHYYTMGEFFWATANCTVQCLCEEGGDVYCFNKTCGSGEVCAVEDGYQGCFPKRETVCLLSQNQVLHTFDGASYAFPSEFSYTLLKTCPERPEYLEIDINKKKPDAGPAWLRGLRILVADQEVKIGGIGASEVKLNGQEVELPFFHPSGKLEIYRNKNSTTVESKGVVTVQYSDIGLLYIRLSTTYFNCTGGLCGFYNANASDEFCLPNGKCTDNLAVFLESWTTFEEICNGECGDLLKACNNDSELLKFYRSRSRCGIINDPSNSSFLECHGVVNVTAYYRTCLFRLCQSGGNESELCDSVARYASACKNADVEVGPWRTYDFCPLECPENSHFEECITCTETCETLTLGPICVDSCSEGCQCDEGYALLGSQCVTRSECGCNFEGHQLATNETFWVDLDCQIFCYCSGTDNRVHCETIPCKDDEYCMEEGGLYYCQARTDASCIVSGYGHYLTFDGFPFDFQTSCPLILCTTGSRPSSDSFPKFVVTAKNEDRDPSLALWVKQVDVTVFGYSIVIHRAYKHTVLVNSERLYLPLKLGQGKINIFSFGFHVVVETDFGLKVVYDWKTFLSITVPRSMQNSTYGLCGRYNGNPDDDLEMPMGLLASSVNEFGQSWVKRDTFCQVGCGDRCPSCAKVEGFSKVQQLCSLIPNQNAAFSKCHSKVNPTFFYKNCLFDSCIDGGAVQTACSWLQNYASTCQTQGITVTGWRNYTSCTVTCPPNSHYESCVSVCQPRCAAIRLKSDCSHYCVEGCHCDAGYVLNGKSCILPHSCGCYSDGKYYEPKQLFWNSDCTRRCRCFRRNVIQCDPRQCKSDEECALRNGVRGCFSTKTSYCLAAGGGVFRTFDGAFLRFPANCAFVLSTICQKLPDISFQLIINFDKWSAPNLTIISPVYFYINEEQILINDRNTVKVNGTQVNVPFITGLATKIYSSEGFLVIDTSPDIQIYYNGFNVIKISISERLQNKVCGLCGNFNGDLTDDYVTLRGKPVVSSVVLAQSWKTNGMQKRPLAPSCNELQFSQYAAMCDNVHIQKMQGDGYCLKLTDMKGFFQPCYGLLDPLPFYESCYLDGCYSHKKFQLCGSLAAYGEACRSFGILSTEWIEKENCSGVVEDPCVGADCPNRTCELGNGRELCGCIEPPPYGNNSHDIIDAEVTCKAAQMEVSISKCKLFQLGFEREGVRINDRQCTGIEGEDFISFQINNTKGNCGNIVQSNGTHIMYKNTLWIESANNTGNIITRDRTINVEFSCAYELDIKISLDSVVKPMLSVINLTVPTQEGSFITKMALYKNASYKHPYRQGEVVLTTRDVLYVGVFVVGADATHLILTLNKCYATPTRDSNDKLRYFIIEGGCQNLKDNTIGIEENAVSLTCRFHVTVFKFIGDYDEVHLHCAVSLCDSEKYSCKITCPHNSRIATDYTKEPKEQIISVGPIRRKRLDWCEDNGGCEQICTSRVDGPLCSCVTGTLQEDGKSCRASNSSMELQVWTLLLIMIQISLWHFVYKSGTTS.

A signal peptide spans 1 to 22 (MNYSSFLRIWVSFIFALVQHQA). N-linked (GlcNAc...) asparagine glycans are attached at residues N34, N187, N215, N278, N455, N506, N528, and N560. The NIDO domain occupies 98–252 (PFWADVHNGI…GRWAFKVDGK (155 aa)). In terms of domain architecture, VWFC spans 260 to 314 (CTSRGQFLRRGEVFWDDLNCTVKCRCLDFNNEIYCQEASCSPYEVCEPKGKFFYC). The VWFD 1 domain occupies 320–500 (STCVVFGEPH…RVYHADWKCD (181 aa)). 2 disulfide bridges follow: C322/C461 and C344/C499. Positions 597–650 (CPSFSHYSVCTSSCPDTCSDLTASRNCATPCTEGCECNQGFVLSTSQCVPLHKC) constitute a TIL 1 domain. Residues N670, N687, N813, N843, N855, N898, N920, N931, and N949 are each glycosylated (N-linked (GlcNAc...) asparagine). The VWFD 2 domain maps to 711 to 886 (TVCLLSQNQV…SWTTFEEICN (176 aa)). Cysteines 713 and 849 form a disulfide. The region spanning 984 to 1036 (CPENSHFEECITCTETCETLTLGPICVDSCSEGCQCDEGYALLGSQCVTRSEC) is the TIL 2 domain. Residues N1048, N1235, and N1364 are each glycosylated (N-linked (GlcNAc...) asparagine). The 181-residue stretch at 1098–1278 (ASCIVSGYGH…SWVKRDTFCQ (181 aa)) folds into the VWFD 3 domain. 2 disulfide bridges follow: C1100–C1241 and C1122–C1277. One can recognise a TIL 3 domain in the interval 1372–1425 (CPPNSHYESCVSVCQPRCAAIRLKSDCSHYCVEGCHCDAGYVLNGKSCILPHSC). Residues 1485 to 1666 (SYCLAAGGGV…QKRPLAPSCN (182 aa)) enclose the VWFD 4 domain. Disulfide bonds link C1487–C1622, C1509–C1665, C1717–C1775, C1741–C1784, C1786–C1818, C1806–C1898, and C1837–C1857. N1538, N1565, N1756, N1772, N1794, N1851, N1864, N1880, N1920, and N1939 each carry an N-linked (GlcNAc...) asparagine glycan. Residues 1805-2059 (TCKAAQMEVS…YSCKITCPHN (255 aa)) form the ZP domain. Disulfide bonds link C1980–C2040, C2001–C2056, and C2045–C2052. N2091 carries GPI-anchor amidated asparagine lipidation. Positions 2092–2155 (GGCEQICTSR…HFVYKSGTTS (64 aa)) are cleaved as a propeptide — removed in mature form.

May form homomeric filament after self-association or heteromeric filament after association with beta-tectorin. Interacts with CEACAM16. Post-translationally, the presence of a hydrophobic C-terminus preceded by a potential cleavage site strongly suggests that tectorins are synthesized as glycosylphosphatidylinositol-linked, membrane-bound precursors. Tectorins are targeted to the apical surface of the inner ear epithelia by the lipid and proteolytically released into the extracellular compartment.

It localises to the cell membrane. It is found in the secreted. Its subcellular location is the extracellular space. The protein resides in the extracellular matrix. Its function is as follows. One of the major non-collagenous components of the tectorial membrane. The tectorial membrane is an extracellular matrix of the inner ear that covers the neuroepithelium of the cochlea and contacts the stereocilia bundles of specialized sensory hair cells. Sound induces movement of these hair cells relative to the tectorial membrane, deflects the stereocilia and leads to fluctuations in hair-cell membrane potential, transducing sound into electrical signals. In Homo sapiens (Human), this protein is Alpha-tectorin (TECTA).